The chain runs to 417 residues: Putative competence-damage inducible protein (417 aa).

Belongs to the CinA family.

This is Putative competence-damage inducible protein from Leuconostoc citreum (strain KM20).